A 444-amino-acid polypeptide reads, in one-letter code: UDP-N-acetylmuramate--L-alanine ligase (444 aa).

Position 110–116 (110–116 (GAHGKTS)) interacts with ATP.

This sequence belongs to the MurCDEF family.

It localises to the cytoplasm. The catalysed reaction is UDP-N-acetyl-alpha-D-muramate + L-alanine + ATP = UDP-N-acetyl-alpha-D-muramoyl-L-alanine + ADP + phosphate + H(+). The protein operates within cell wall biogenesis; peptidoglycan biosynthesis. Cell wall formation. The polypeptide is UDP-N-acetylmuramate--L-alanine ligase (Streptococcus pneumoniae (strain JJA)).